The following is a 151-amino-acid chain: Probable cGMP 3',5'-cyclic phosphodiesterase subunit delta (151 aa).

This sequence belongs to the PDE6D/unc-119 family. Interacts with Pde6.

It localises to the nucleus. It is found in the cytoplasm. This is Probable cGMP 3',5'-cyclic phosphodiesterase subunit delta from Drosophila mojavensis (Fruit fly).